A 197-amino-acid polypeptide reads, in one-letter code: Large ribosomal subunit protein uL10 (197 aa).

The interval 162 to 197 (GGASAPAAEEAPAAEEAAAEEVAAPAEAAEAATEEN) is disordered. Residues 163–197 (GASAPAAEEAPAAEEAAAEEVAAPAEAAEAATEEN) are compositionally biased toward low complexity.

This sequence belongs to the universal ribosomal protein uL10 family. In terms of assembly, part of the ribosomal stalk of the 50S ribosomal subunit. The N-terminus interacts with L11 and the large rRNA to form the base of the stalk. The C-terminus forms an elongated spine to which L12 dimers bind in a sequential fashion forming a multimeric L10(L12)X complex.

Forms part of the ribosomal stalk, playing a central role in the interaction of the ribosome with GTP-bound translation factors. The protein is Large ribosomal subunit protein uL10 of Paenarthrobacter aurescens (strain TC1).